We begin with the raw amino-acid sequence, 210 residues long: Pyridoxine/pyridoxamine 5'-phosphate oxidase (210 aa).

Substrate is bound by residues 7 to 10 and Lys-65; that span reads REDY. FMN contacts are provided by residues 60–65, 75–76, Arg-81, Lys-82, and Gln-104; these read RMVLLK and FT. The substrate site is built by Tyr-122, Arg-126, and Ser-130. Residues 139–140 and Trp-183 contribute to the FMN site; that span reads QS. 189–191 is a substrate binding site; sequence RLH. Residue Arg-193 coordinates FMN.

The protein belongs to the pyridoxamine 5'-phosphate oxidase family. In terms of assembly, homodimer. FMN serves as cofactor.

The enzyme catalyses pyridoxamine 5'-phosphate + O2 + H2O = pyridoxal 5'-phosphate + H2O2 + NH4(+). The catalysed reaction is pyridoxine 5'-phosphate + O2 = pyridoxal 5'-phosphate + H2O2. Its pathway is cofactor metabolism; pyridoxal 5'-phosphate salvage; pyridoxal 5'-phosphate from pyridoxamine 5'-phosphate: step 1/1. It functions in the pathway cofactor metabolism; pyridoxal 5'-phosphate salvage; pyridoxal 5'-phosphate from pyridoxine 5'-phosphate: step 1/1. Its function is as follows. Catalyzes the oxidation of either pyridoxine 5'-phosphate (PNP) or pyridoxamine 5'-phosphate (PMP) into pyridoxal 5'-phosphate (PLP). The protein is Pyridoxine/pyridoxamine 5'-phosphate oxidase of Neisseria meningitidis serogroup A / serotype 4A (strain DSM 15465 / Z2491).